The chain runs to 497 residues: Probable cytosol aminopeptidase (497 aa).

The Mn(2+) site is built by Lys263 and Asp268. Lys275 is a catalytic residue. Residues Asp286, Asp345, and Glu347 each contribute to the Mn(2+) site. The active site involves Arg349.

Belongs to the peptidase M17 family. Mn(2+) is required as a cofactor.

The protein resides in the cytoplasm. The catalysed reaction is Release of an N-terminal amino acid, Xaa-|-Yaa-, in which Xaa is preferably Leu, but may be other amino acids including Pro although not Arg or Lys, and Yaa may be Pro. Amino acid amides and methyl esters are also readily hydrolyzed, but rates on arylamides are exceedingly low.. It carries out the reaction Release of an N-terminal amino acid, preferentially leucine, but not glutamic or aspartic acids.. In terms of biological role, presumably involved in the processing and regular turnover of intracellular proteins. Catalyzes the removal of unsubstituted N-terminal amino acids from various peptides. The protein is Probable cytosol aminopeptidase of Methylorubrum extorquens (strain CM4 / NCIMB 13688) (Methylobacterium extorquens).